The chain runs to 603 residues: MTTVPISNIRNFSIVAHIDHGKSTLADRLIQMTGGLTDREMAGKEQVLDSMDIERERGITIKAQTVRLAYRAKDGKDYIFNLMDTPGHVDFAYEVSRSLAACEGSLLVVDASQGVEAQTLANVYQALDNNHEIVPVLNKVDLPAAEPEKVKQQIEDVIGIDASDAVMISAKTGLGVPDVLEAIVTRLPPPKGDRDATLKALLVDSWYDVYLGVVVLIRVVDGVMKKGSRVRMMGTGAAYDVERVGFFTPKMTQVDELGPGEIGFITAAIKEVADTRVGDTITDDRKPVTEMLPGFKPAIPVVFCGLFPVDADDFETLRAAMGKLRLNDASFSFEMETSAALGFGFRCGFLGLLHLEIIQERLSREFDLNLIATAPSVIYKMKLTDGTELEIHNPVDMPDVVKIEEIQEPWIEATILTPDEYLGSVLKLCQDRRGAQKELTYVGARAMVKYDLPLNEVVFDFYDRLKSVSKGYASFDYHLTDYKPADLVKMQILVNAEPVDALSMLVHRTRAEGRGRAMVEKMKELIPPHMFQIPIQAAIGGKVIARETVRALRKDVTAKCYGGDITRKRKLLEKQKEGKKKMRQFGKVDIPQEAFIAALKVDS.

A tr-type G domain is found at 7–191; sequence SNIRNFSIVA…AIVTRLPPPK (185 aa). Residues 19 to 24 and 138 to 141 contribute to the GTP site; these read DHGKST and NKVD.

It belongs to the TRAFAC class translation factor GTPase superfamily. Classic translation factor GTPase family. LepA subfamily.

The protein resides in the cell inner membrane. It carries out the reaction GTP + H2O = GDP + phosphate + H(+). Functionally, required for accurate and efficient protein synthesis under certain stress conditions. May act as a fidelity factor of the translation reaction, by catalyzing a one-codon backward translocation of tRNAs on improperly translocated ribosomes. Back-translocation proceeds from a post-translocation (POST) complex to a pre-translocation (PRE) complex, thus giving elongation factor G a second chance to translocate the tRNAs correctly. Binds to ribosomes in a GTP-dependent manner. The polypeptide is Elongation factor 4 (Bradyrhizobium diazoefficiens (strain JCM 10833 / BCRC 13528 / IAM 13628 / NBRC 14792 / USDA 110)).